We begin with the raw amino-acid sequence, 497 residues long: Glycerol kinase (497 aa).

An ADP-binding site is contributed by Thr12. Thr12, Thr13, and Ser14 together coordinate ATP. Residue Thr12 participates in sn-glycerol 3-phosphate binding. Arg16 is a binding site for ADP. Sn-glycerol 3-phosphate contacts are provided by Arg82, Glu83, Tyr134, and Asp243. Residues Arg82, Glu83, Tyr134, Asp243, and Gln244 each contribute to the glycerol site. ADP contacts are provided by Thr265 and Gly308. The ATP site is built by Thr265, Gly308, Gln312, and Gly409. Residues Gly409 and Asn413 each contribute to the ADP site.

The protein belongs to the FGGY kinase family.

The enzyme catalyses glycerol + ATP = sn-glycerol 3-phosphate + ADP + H(+). The protein operates within polyol metabolism; glycerol degradation via glycerol kinase pathway; sn-glycerol 3-phosphate from glycerol: step 1/1. With respect to regulation, inhibited by fructose 1,6-bisphosphate (FBP). Its function is as follows. Key enzyme in the regulation of glycerol uptake and metabolism. Catalyzes the phosphorylation of glycerol to yield sn-glycerol 3-phosphate. This chain is Glycerol kinase, found in Nitratidesulfovibrio vulgaris (strain ATCC 29579 / DSM 644 / CCUG 34227 / NCIMB 8303 / VKM B-1760 / Hildenborough) (Desulfovibrio vulgaris).